We begin with the raw amino-acid sequence, 416 residues long: MEPMSNKQDSNSSEGDEKGWPDVPKRKRKNSQCSMKSMSALSVSVPGYIPSYLEKDEPCVVCGDKATGYHYRCITCEGCKGFFRRTIQKNLHPAYSCKYEGCCIIDKITRNQCQLCRFKKCISVGMAMDLVLDDSKRVAKRRLIEENREKRKREEMVRTLQVRPEPDTAEWELIRMATDAHRHTNAQGSSWKQKRKFLSDDIGQGPMVPTSDGDKVDLEAFSEFTKIMTPAITRVVDFAKKLPMFSELPCEDQIILLKGCCMEIMSLRAAVRYDPESETLTLNGEMAVKREQLKNGGLGVVSDAIFDLGKSLAQFNLDDTEVALMQAVLLMSSDRSGLTSLEKIEQCQEAYLLAFEHYINYRKHNIPHFWPKLLMKVTDLRMIGACHASRFLHMKVECSSELFPPLFLEVFEDQEV.

Over residues 1-13 (MEPMSNKQDSNSS) the composition is skewed to polar residues. A disordered region spans residues 1–37 (MEPMSNKQDSNSSEGDEKGWPDVPKRKRKNSQCSMKS). The tract at residues 1–58 (MEPMSNKQDSNSSEGDEKGWPDVPKRKRKNSQCSMKSMSALSVSVPGYIPSYLEKDEP) is modulating. A compositionally biased stretch (basic and acidic residues) spans 15–24 (GDEKGWPDVP). Residues Cys59, Cys62, Cys76, Cys79, Cys97, Cys103, Cys113, and Cys116 each contribute to the Zn(2+) site. 2 consecutive NR C4-type zinc fingers follow at residues 59-79 (CVVCGDKATGYHYRCITCEGC) and 97-121 (CKYEGCCIIDKITRNQCQLCRFKKC). Positions 59–133 (CVVCGDKATG…VGMAMDLVLD (75 aa)) form a DNA-binding region, nuclear receptor. Residues 169 to 413 (AEWELIRMAT…PPLFLEVFED (245 aa)) form the NR LBD domain. A 3,3',5-triiodo-L-thyronine-binding site is contributed by Arg234.

Belongs to the nuclear hormone receptor family. NR1 subfamily.

It is found in the nucleus. Functionally, nuclear hormone receptor that can act as a repressor or activator of transcription. High affinity receptor for thyroid hormones, including triiodothyronine and thyroxine. The chain is Thyroid hormone receptor alpha (thra) from Hippoglossus hippoglossus (Atlantic halibut).